Reading from the N-terminus, the 625-residue chain is Threonine--tRNA ligase (625 aa).

Residues 1–149 form an editing domain region; the sequence is MRVLLIHAKR…RNYEAKTTAR (149 aa). Catalytic stretches follow at residues 197-494 and 198-494; these read NPVN…PYIP and PVNK…PYIP. Cys-291, His-342, and His-463 together coordinate Zn(2+).

Belongs to the class-II aminoacyl-tRNA synthetase family. Homodimer. It depends on Zn(2+) as a cofactor.

Its subcellular location is the cytoplasm. The enzyme catalyses tRNA(Thr) + L-threonine + ATP = L-threonyl-tRNA(Thr) + AMP + diphosphate + H(+). In terms of biological role, catalyzes the attachment of threonine to tRNA(Thr) in a two-step reaction: L-threonine is first activated by ATP to form Thr-AMP and then transferred to the acceptor end of tRNA(Thr). Also edits incorrectly charged L-seryl-tRNA(Thr). In Hyperthermus butylicus (strain DSM 5456 / JCM 9403 / PLM1-5), this protein is Threonine--tRNA ligase.